A 69-amino-acid polypeptide reads, in one-letter code: Cytochrome c oxidase subunit 8A, mitochondrial (69 aa).

The N-terminal 25 residues, 1–25, are a transit peptide targeting the mitochondrion; that stretch reads MSVLTPLLLRGLTGSARRLPVPCAR. Residues 2–19 carry the SIFI-degron motif; it reads SVLTPLLLRGLTGSARRL. The Mitochondrial matrix segment spans residues 26–36; that stretch reads VHSKPPREQLG. Residues 37–60 traverse the membrane as a helical segment; that stretch reads TMDIAIGLTSCFVCFLLPSGWVLS. Topologically, residues 61–69 are mitochondrial intermembrane; the sequence is HLENYKKRE.

This sequence belongs to the cytochrome c oxidase VIII family. In terms of assembly, component of the cytochrome c oxidase (complex IV, CIV), a multisubunit enzyme composed of 14 subunits. The complex is composed of a catalytic core of 3 subunits MT-CO1, MT-CO2 and MT-CO3, encoded in the mitochondrial DNA, and 11 supernumerary subunits COX4I, COX5A, COX5B, COX6A, COX6B, COX6C, COX7A, COX7B, COX7C, COX8 and NDUFA4, which are encoded in the nuclear genome. The complex exists as a monomer or a dimer and forms supercomplexes (SCs) in the inner mitochondrial membrane with NADH-ubiquinone oxidoreductase (complex I, CI) and ubiquinol-cytochrome c oxidoreductase (cytochrome b-c1 complex, complex III, CIII), resulting in different assemblies (supercomplex SCI(1)III(2)IV(1) and megacomplex MCI(2)III(2)IV(2)). In terms of processing, in response to mitochondrial stress, the precursor protein is ubiquitinated by the SIFI complex in the cytoplasm before mitochondrial import, leading to its degradation. Within the SIFI complex, UBR4 initiates ubiquitin chain that are further elongated or branched by KCMF1.

Its subcellular location is the mitochondrion inner membrane. It functions in the pathway energy metabolism; oxidative phosphorylation. Component of the cytochrome c oxidase, the last enzyme in the mitochondrial electron transport chain which drives oxidative phosphorylation. The respiratory chain contains 3 multisubunit complexes succinate dehydrogenase (complex II, CII), ubiquinol-cytochrome c oxidoreductase (cytochrome b-c1 complex, complex III, CIII) and cytochrome c oxidase (complex IV, CIV), that cooperate to transfer electrons derived from NADH and succinate to molecular oxygen, creating an electrochemical gradient over the inner membrane that drives transmembrane transport and the ATP synthase. Cytochrome c oxidase is the component of the respiratory chain that catalyzes the reduction of oxygen to water. Electrons originating from reduced cytochrome c in the intermembrane space (IMS) are transferred via the dinuclear copper A center (CU(A)) of subunit 2 and heme A of subunit 1 to the active site in subunit 1, a binuclear center (BNC) formed by heme A3 and copper B (CU(B)). The BNC reduces molecular oxygen to 2 water molecules using 4 electrons from cytochrome c in the IMS and 4 protons from the mitochondrial matrix. The protein is Cytochrome c oxidase subunit 8A, mitochondrial (COX8A) of Otolemur crassicaudatus (Brown greater galago).